Consider the following 345-residue polypeptide: Fructose-bisphosphate aldolase (345 aa).

Serine 53 is a binding site for D-glyceraldehyde 3-phosphate. The active-site Proton donor is the aspartate 95. Positions 96, 131, 161, and 212 each coordinate Zn(2+). A dihydroxyacetone phosphate-binding site is contributed by glycine 213. Histidine 252 contributes to the Zn(2+) binding site. Dihydroxyacetone phosphate-binding positions include 253 to 255 and 274 to 277; these read GGS and NVDT.

The protein belongs to the class II fructose-bisphosphate aldolase family. Zn(2+) serves as cofactor.

The enzyme catalyses beta-D-fructose 1,6-bisphosphate = D-glyceraldehyde 3-phosphate + dihydroxyacetone phosphate. It functions in the pathway carbohydrate degradation; glycolysis; D-glyceraldehyde 3-phosphate and glycerone phosphate from D-glucose: step 4/4. Functionally, catalyzes the aldol condensation of dihydroxyacetone phosphate (DHAP or glycerone-phosphate) with glyceraldehyde 3-phosphate (G3P) to form fructose 1,6-bisphosphate (FBP) in gluconeogenesis and the reverse reaction in glycolysis. The protein is Fructose-bisphosphate aldolase (fba) of Mycobacterium leprae (strain TN).